A 577-amino-acid polypeptide reads, in one-letter code: Adenine deaminase (577 aa).

Belongs to the metallo-dependent hydrolases superfamily. Adenine deaminase family. It depends on Mn(2+) as a cofactor.

It catalyses the reaction adenine + H2O + H(+) = hypoxanthine + NH4(+). The polypeptide is Adenine deaminase (Bacillus velezensis (strain DSM 23117 / BGSC 10A6 / LMG 26770 / FZB42) (Bacillus amyloliquefaciens subsp. plantarum)).